A 161-amino-acid chain; its full sequence is Pathogenesis-related protein 1 (161 aa).

A signal peptide spans 1–26 (MKVTSYSRILIILAALVGALVVPLKA). Residues 34 to 149 (VNAHNQARSQ…NGGTIISCNY (116 aa)) enclose the SCP domain. 3 cysteine pairs are disulfide-bonded: Cys-70/Cys-138, Cys-113/Cys-117, and Cys-133/Cys-147.

It belongs to the CRISP family. Expressed in flowers, stems and roots but not in leaves.

Probably involved in the defense reaction of plants against pathogens. This chain is Pathogenesis-related protein 1, found in Arabidopsis thaliana (Mouse-ear cress).